Consider the following 334-residue polypeptide: D-fructose 1,6-bisphosphatase class 2/sedoheptulose 1,7-bisphosphatase (334 aa).

The Mn(2+) site is built by D33, E57, D85, and E88. Substrate-binding positions include 88-90 (EGT), Y119, 164-166 (RAR), and 186-188 (DGD). Residue E213 coordinates Mn(2+).

The protein belongs to the FBPase class 2 family. In terms of assembly, homotetramer. Mn(2+) is required as a cofactor.

The enzyme catalyses beta-D-fructose 1,6-bisphosphate + H2O = beta-D-fructose 6-phosphate + phosphate. It catalyses the reaction D-sedoheptulose 1,7-bisphosphate + H2O = D-sedoheptulose 7-phosphate + phosphate. The protein operates within carbohydrate biosynthesis; Calvin cycle. Its function is as follows. Catalyzes the hydrolysis of fructose 1,6-bisphosphate (Fru 1,6-P2) and sedoheptulose 1,7-bisphosphate (Sed 1,7-P2) to fructose 6-phosphate and sedoheptulose 7-phosphate, respectively. The chain is D-fructose 1,6-bisphosphatase class 2/sedoheptulose 1,7-bisphosphatase from Synechococcus sp. (strain CC9605).